Here is a 234-residue protein sequence, read N- to C-terminus: Demethylmenaquinone methyltransferase (234 aa).

S-adenosyl-L-methionine-binding positions include Thr-58, Asp-79, and 106–107 (NA).

Belongs to the class I-like SAM-binding methyltransferase superfamily. MenG/UbiE family.

It carries out the reaction a 2-demethylmenaquinol + S-adenosyl-L-methionine = a menaquinol + S-adenosyl-L-homocysteine + H(+). It participates in quinol/quinone metabolism; menaquinone biosynthesis; menaquinol from 1,4-dihydroxy-2-naphthoate: step 2/2. Methyltransferase required for the conversion of demethylmenaquinol (DMKH2) to menaquinol (MKH2). In Geobacillus kaustophilus (strain HTA426), this protein is Demethylmenaquinone methyltransferase.